We begin with the raw amino-acid sequence, 120 residues long: SAGA-associated factor 11 (120 aa).

Residues 40–60 are compositionally biased toward low complexity; the sequence is SLLNSSNSNTNSNTNGTIASN. Residues 40–82 form a disordered region; that stretch reads SLLNSSNSNTNSNTNGTIASNGGNGTTSDENNEIENSTIQDKS. The segment at 93 to 114 adopts an SGF11-type zinc-finger fold; that stretch reads FRCLNCGRNIAGGRFASHISKC.

It belongs to the SGF11 family. In terms of assembly, component of the 1.8 MDa SAGA transcription coactivator-HAT complex. SAGA is built of 5 distinct domains with specialized functions. Within the SAGA complex, SUS1, SGF11, SGF73 and UBP8 form an additional subcomplex of SAGA called the DUB module (deubiquitination module). Interacts directly with SGF73, SUS1 and UBP8.

Its subcellular location is the nucleus. Its function is as follows. Functions as a component of the transcription regulatory histone acetylation (HAT) complex SAGA. At the promoters, SAGA is required for recruitment of the basal transcription machinery. It influences RNA polymerase II transcriptional activity through different activities such as TBP interaction and promoter selectivity, interaction with transcription activators, and chromatin modification through histone acetylation and deubiquitination. SAGA acetylates nucleosomal histone H3 to some extent (to form H3K9ac, H3K14ac, H3K18ac and H3K23ac). SAGA interacts with DNA via upstream activating sequences (UASs). Involved in transcriptional regulation of a subset of SAGA-regulated genes. Within the SAGA complex, participates in a subcomplex, that specifically deubiquitinates histones H2B. This is SAGA-associated factor 11 from Candida albicans (strain SC5314 / ATCC MYA-2876) (Yeast).